The primary structure comprises 201 residues: Small ribosomal subunit protein uS4c (201 aa).

A disordered region spans residues 17-44; it reads ALPGLTNKKPRTGSDLRNQSRSGKKSQY. Residues 89-149 form the S4 RNA-binding domain; the sequence is MRLDNILFRL…DEQKSRALIQ (61 aa).

This sequence belongs to the universal ribosomal protein uS4 family. In terms of assembly, part of the 30S ribosomal subunit. Contacts protein S5. The interaction surface between S4 and S5 is involved in control of translational fidelity.

It localises to the plastid. The protein localises to the chloroplast. One of the primary rRNA binding proteins, it binds directly to 16S rRNA where it nucleates assembly of the body of the 30S subunit. In terms of biological role, with S5 and S12 plays an important role in translational accuracy. In Solanum bulbocastanum (Wild potato), this protein is Small ribosomal subunit protein uS4c (rps4).